The following is a 359-amino-acid chain: 3-dehydroquinate synthase (359 aa).

NAD(+) contacts are provided by residues 71–76 (DGEQFK), 105–109 (GVIGD), 129–130 (TT), Lys-142, Lys-151, and 169–172 (CLQT). Zn(2+) is bound by residues Glu-184, His-247, and His-264.

It belongs to the sugar phosphate cyclases superfamily. Dehydroquinate synthase family. The cofactor is Co(2+). Requires Zn(2+) as cofactor. NAD(+) is required as a cofactor.

It is found in the cytoplasm. It catalyses the reaction 7-phospho-2-dehydro-3-deoxy-D-arabino-heptonate = 3-dehydroquinate + phosphate. The protein operates within metabolic intermediate biosynthesis; chorismate biosynthesis; chorismate from D-erythrose 4-phosphate and phosphoenolpyruvate: step 2/7. Catalyzes the conversion of 3-deoxy-D-arabino-heptulosonate 7-phosphate (DAHP) to dehydroquinate (DHQ). The protein is 3-dehydroquinate synthase of Shewanella sp. (strain ANA-3).